An 87-amino-acid chain; its full sequence is Acyl-CoA-binding protein (87 aa).

N-acetylserine is present on Ser2. Residues 2–87 (SQAEFDKAAE…VEELKKKYGI (86 aa)) form the ACB domain. An N6-acetyllysine; alternate modification is found at Lys8. Lys8 carries the N6-succinyllysine; alternate modification. Lys14 is an an acyl-CoA binding site. Lys17 is subject to N6-succinyllysine. At Lys19 the chain carries N6-acetyllysine. Residue Tyr29 is modified to Phosphotyrosine. Residues 29-33 (YSHYK), Lys51, Lys55, and Tyr74 contribute to the an acyl-CoA site. Lys51 is modified (N6-acetyllysine). At Lys55 the chain carries N6-acetyllysine; alternate. Residue Lys55 is modified to N6-succinyllysine; alternate. Lys55 carries the post-translational modification N6-(2-hydroxyisobutyryl)lysine; alternate. The residue at position 55 (Lys55) is an N6-malonyllysine; alternate. N6-acetyllysine; alternate is present on Lys77. Position 77 is an N6-succinyllysine; alternate (Lys77).

It belongs to the ACBP family. In terms of assembly, monomer.

It localises to the endoplasmic reticulum. It is found in the golgi apparatus. Binds medium- and long-chain acyl-CoA esters with very high affinity and may function as an intracellular carrier of acyl-CoA esters. The polypeptide is Acyl-CoA-binding protein (DBI) (Chaetophractus villosus (South American armadillo)).